A 91-amino-acid chain; its full sequence is Large ribosomal subunit protein bL28 (91 aa).

Residues 1–23 (MSRVCELTGKGPMSGNNVSHANN) are disordered.

Belongs to the bacterial ribosomal protein bL28 family.

The protein is Large ribosomal subunit protein bL28 of Paracoccus denitrificans (strain Pd 1222).